Here is a 181-residue protein sequence, read N- to C-terminus: Oligoribonuclease (181 aa).

The Exonuclease domain maps to 8 to 171 (LIWIDLEMTG…DDIRESVAEL (164 aa)). The active site involves tyrosine 129.

It belongs to the oligoribonuclease family. Homodimer.

The protein resides in the cytoplasm. Functionally, 3'-to-5' exoribonuclease specific for small oligoribonucleotides. This chain is Oligoribonuclease, found in Escherichia coli O157:H7.